The following is a 365-amino-acid chain: Phosphate acyltransferase (365 aa).

The protein belongs to the PlsX family. As to quaternary structure, homodimer. Probably interacts with PlsY.

It is found in the cytoplasm. It carries out the reaction a fatty acyl-[ACP] + phosphate = an acyl phosphate + holo-[ACP]. Its pathway is lipid metabolism; phospholipid metabolism. Catalyzes the reversible formation of acyl-phosphate (acyl-PO(4)) from acyl-[acyl-carrier-protein] (acyl-ACP). This enzyme utilizes acyl-ACP as fatty acyl donor, but not acyl-CoA. This Klebsiella pneumoniae (strain 342) protein is Phosphate acyltransferase.